The primary structure comprises 376 residues: MSWVRFTIEQKDGNFAYPPPFYKDPILSPPSPPPPSSGNRISPAVLFVIVILAVLFFISGLLHLLVRFLIKHPSATASSRSNRFPEISTSDALQRQLQQLFHLNDSGLDQAFIDALPVFHYKEIVGSAGGGGGNGAAQEPFDCAVCLCEFSEKDKLRLLPMCSHAFHLNCIDTWLQSNSTCPLCRGTLFSPGFSMENPMFDFDDIREDEEGVTENGSQKTMEIQEIVVEKGVLPVRLGKFKRLDNVGNGQGQDVVAGGETSSSNLDARRCFSMGSYQYILGNSELKVPFANDRLPRLKPQDKESEQTGNSSSEDNKKINTVAKGESFSVSKIWLWPKKDKFSSDAQRRLPSSSLNVDDLPKLPWMEEHKKLENDGR.

Residues 45–65 (VLFVIVILAVLFFISGLLHLL) traverse the membrane as a helical segment. The RING-type; atypical zinc finger occupies 143 to 185 (CAVCLCEFSEKDKLRLLPMCSHAFHLNCIDTWLQSNSTCPLCR). Basic and acidic residues-rich tracts occupy residues 296-305 (RLKPQDKESE) and 358-376 (DLPK…NDGR). 2 disordered regions span residues 296–320 (RLKP…KINT) and 341–376 (FSSD…NDGR).

It belongs to the RING-type zinc finger family. ATL subfamily.

The protein resides in the membrane. The catalysed reaction is S-ubiquitinyl-[E2 ubiquitin-conjugating enzyme]-L-cysteine + [acceptor protein]-L-lysine = [E2 ubiquitin-conjugating enzyme]-L-cysteine + N(6)-ubiquitinyl-[acceptor protein]-L-lysine.. The protein operates within protein modification; protein ubiquitination. This chain is RING-H2 finger protein ATL46 (ATL46), found in Arabidopsis thaliana (Mouse-ear cress).